Consider the following 554-residue polypeptide: L-ascorbate oxidase homolog (554 aa).

Positions 1–21 are cleaved as a signal peptide; sequence MGSGKVTFVALLLCLSVGVIA. Plastocyanin-like domains follow at residues 22–143 and 196–296; these read EDPY…LNVH and SAKV…AIIR. N31, N59, and N108 each carry an N-linked (GlcNAc...) asparagine glycan. C101 and C540 are joined by a disulfide. N-linked (GlcNAc...) asparagine glycosylation is found at N332, N352, and N423. Residues 411–521 form the Plastocyanin-like 3 domain; that stretch reads DPSKLTIATN…LGEQLYFSVL (111 aa).

This sequence belongs to the multicopper oxidase family. In terms of tissue distribution, pollen.

The protein resides in the secreted. Its subcellular location is the extracellular space. Its function is as follows. Probable oxidoreductase that may be involved in pollen tube growth. The protein is L-ascorbate oxidase homolog of Nicotiana tabacum (Common tobacco).